We begin with the raw amino-acid sequence, 123 residues long: MARTLALRASAGLVAGMAMAAITLAPGARAETGEQFPGDGVFLVGTDIAPGTYRTEGPSNPLILVFGRVSELSTCSWSTHSAPEVSNENIVDTNTSMGPMSVVIPPTVAAFQTHNCKLWMRIS.

A signal peptide spans 1 to 20; sequence MARTLALRASAGLVAGMAMA.

This is an uncharacterized protein from Mycobacterium bovis (strain ATCC BAA-935 / AF2122/97).